The following is a 505-amino-acid chain: Deoxyguanosinetriphosphate triphosphohydrolase (505 aa).

The 208-residue stretch at 66–273 (RLTHSMEVQQ…MEAADDISYC (208 aa)) folds into the HD domain.

Belongs to the dGTPase family. Type 1 subfamily. In terms of assembly, homotetramer. The cofactor is Mg(2+).

The enzyme catalyses dGTP + H2O = 2'-deoxyguanosine + triphosphate + H(+). Its activity is regulated as follows. Inhibited by the action of reducing agents such as dithiothreitol and 2-mercaptoethanol. DGTPase preferentially hydrolyzes dGTP over the other canonical NTPs. The sequence is that of Deoxyguanosinetriphosphate triphosphohydrolase from Shigella boydii.